The primary structure comprises 104 residues: Large ribosomal subunit protein uL24 (104 aa).

It belongs to the universal ribosomal protein uL24 family. In terms of assembly, part of the 50S ribosomal subunit.

Functionally, one of two assembly initiator proteins, it binds directly to the 5'-end of the 23S rRNA, where it nucleates assembly of the 50S subunit. In terms of biological role, one of the proteins that surrounds the polypeptide exit tunnel on the outside of the subunit. The sequence is that of Large ribosomal subunit protein uL24 from Bradyrhizobium diazoefficiens (strain JCM 10833 / BCRC 13528 / IAM 13628 / NBRC 14792 / USDA 110).